A 410-amino-acid polypeptide reads, in one-letter code: Phosphoglycerate kinase (410 aa).

Residues 19–21, Arg34, 57–60, Arg114, and Arg154 contribute to the substrate site; these read DLN and HQGK. ATP is bound by residues Glu332 and 358–361; that span reads GGHS.

This sequence belongs to the phosphoglycerate kinase family. Homodimer.

The protein localises to the cytoplasm. It carries out the reaction (2R)-3-phosphoglycerate + ATP = (2R)-3-phospho-glyceroyl phosphate + ADP. It participates in carbohydrate degradation; glycolysis; pyruvate from D-glyceraldehyde 3-phosphate: step 2/5. The sequence is that of Phosphoglycerate kinase (pgk) from Pyrococcus furiosus (strain ATCC 43587 / DSM 3638 / JCM 8422 / Vc1).